The chain runs to 410 residues: Cysteine desulfurase IscS (410 aa).

Pyridoxal 5'-phosphate-binding positions include 80–81 (AT), Asn160, Gln188, and 208–210 (SGH). Residue Lys211 is modified to N6-(pyridoxal phosphate)lysine. Thr248 contributes to the pyridoxal 5'-phosphate binding site. Catalysis depends on Cys334, which acts as the Cysteine persulfide intermediate. Cys334 contacts [2Fe-2S] cluster.

Belongs to the class-V pyridoxal-phosphate-dependent aminotransferase family. NifS/IscS subfamily. In terms of assembly, homodimer. Forms a heterotetramer with IscU, interacts with other sulfur acceptors. It depends on pyridoxal 5'-phosphate as a cofactor.

It localises to the cytoplasm. It catalyses the reaction (sulfur carrier)-H + L-cysteine = (sulfur carrier)-SH + L-alanine. Its pathway is cofactor biosynthesis; iron-sulfur cluster biosynthesis. Functionally, master enzyme that delivers sulfur to a number of partners involved in Fe-S cluster assembly, tRNA modification or cofactor biosynthesis. Catalyzes the removal of elemental sulfur atoms from cysteine to produce alanine. Functions as a sulfur delivery protein for Fe-S cluster synthesis onto IscU, an Fe-S scaffold assembly protein, as well as other S acceptor proteins. This chain is Cysteine desulfurase IscS, found in Rickettsia bellii (strain OSU 85-389).